The sequence spans 437 residues: Putative metabolite transport protein NicT (437 aa).

12 helical membrane passes run 28–48 (LIPF…NVGF), 66–86 (LGAG…NLIL), 93–113 (LWIA…MFVT), 123–143 (FLLG…LTMW), 152–172 (IIAL…PISG), 189–209 (WLFL…FWAL), 254–274 (VWML…MGFW), 290–310 (IGLL…MIGA), 320–340 (WHII…TLFS), 347–367 (VVLF…FFSL), 374–394 (GTAA…AGLV), and 411–431 (AALW…IALP).

Belongs to the major facilitator superfamily.

The protein resides in the membrane. In terms of biological role, probable transporter, possibly involved in the aerobic nicotinate degradation pathway. In Pseudomonas putida (strain ATCC 47054 / DSM 6125 / CFBP 8728 / NCIMB 11950 / KT2440), this protein is Putative metabolite transport protein NicT (nicT).